Reading from the N-terminus, the 133-residue chain is Small ribosomal subunit protein eS8 (133 aa).

The interval 1 to 34 (MGVWHGRSLRKPTGGRIRPHRKKRKFEMGNPPTE) is disordered.

It belongs to the eukaryotic ribosomal protein eS8 family. In terms of assembly, part of the 30S ribosomal subunit.

In Methanopyrus kandleri (strain AV19 / DSM 6324 / JCM 9639 / NBRC 100938), this protein is Small ribosomal subunit protein eS8.